The primary structure comprises 264 residues: MKPTTIASLQKCKQDKKRFATITAYDYSFAKLFAEEGLNVMLVGDSLGMTVQGHDSTLPVTVADIAYHTAAVRRGAPNCLLLADLPFMAYATPEQAFENAATVMRAGANMVKIEGGEWLVETVQMLTERAVPVCGHLGLTPQSVNIFGGYKVQGRGDEASDQLLSDALALEAAGAQLLVLECVPVELAKRITEALAIPVIGIGAGNVTDGQILVMHDAFGITGGHIPKFAKNFLAETGDIRAAVRQYMAEVESGVYPGEEHSFH.

Mg(2+) is bound by residues D45 and D84. 3-methyl-2-oxobutanoate-binding positions include 45 to 46 (DS), D84, and K112. Position 114 (E114) interacts with Mg(2+). The Proton acceptor role is filled by E181.

It belongs to the PanB family. As to quaternary structure, homodecamer; pentamer of dimers. It depends on Mg(2+) as a cofactor.

The protein resides in the cytoplasm. It carries out the reaction 3-methyl-2-oxobutanoate + (6R)-5,10-methylene-5,6,7,8-tetrahydrofolate + H2O = 2-dehydropantoate + (6S)-5,6,7,8-tetrahydrofolate. It participates in cofactor biosynthesis; (R)-pantothenate biosynthesis; (R)-pantoate from 3-methyl-2-oxobutanoate: step 1/2. Its function is as follows. Catalyzes the reversible reaction in which hydroxymethyl group from 5,10-methylenetetrahydrofolate is transferred onto alpha-ketoisovalerate to form ketopantoate. This Escherichia coli O127:H6 (strain E2348/69 / EPEC) protein is 3-methyl-2-oxobutanoate hydroxymethyltransferase.